The primary structure comprises 345 residues: tRNA pseudouridine synthase B (345 aa).

D39 functions as the Nucleophile in the catalytic mechanism.

This sequence belongs to the pseudouridine synthase TruB family. Type 1 subfamily.

It catalyses the reaction uridine(55) in tRNA = pseudouridine(55) in tRNA. Responsible for synthesis of pseudouridine from uracil-55 in the psi GC loop of transfer RNAs. This is tRNA pseudouridine synthase B from Rickettsia rickettsii (strain Iowa).